Here is a 473-residue protein sequence, read N- to C-terminus: MNKLSGGGGRRTRVEGGQLGGEEWTRHGSFVNKPTRGWLHPNDKVMGPGVSYLVRYMGCVEVLQSMRALDFNTRTQVTREAISLVCEAVPGAKGATRRRKPCSRPLSSILGRSNLKFAGMPITLTVSTSSLNLMAADCKQIIANHHMQSISFASGGDPDTAEYVAYVAKDPVNQRACHILECPEGLAQDVISTIGQAFELRFKQYLRNPPRLVTPHDRMAGFDGSAWDEEEEEPPDHQYYNDFPGKEPPLGGVVDMRLREGALPGAARPTPPSAQTPSHLGATLPVGQPAGGDPEARRQMPPPPPSSGRELFDDPSYVNVQNLDKARQAGAGAGPPNPTINGSAPRDLFDMKPFEDALRMPPPPQSTAMAEQLRGEPWFHGKLSRREAEALLQVNGDFLVRESTTTPGQYVLTGLQSGQPKHLLLVDPEGVVRTKDHRFESVSHLISYHMDNHLPIISAGSELCLQQPVERKL.

The tract at residues 1 to 26 is disordered; it reads MNKLSGGGGRRTRVEGGQLGGEEWTR. A Phosphoserine modification is found at Ser29. Lys44 carries the N6-acetyllysine modification. Residues 46–229 form the PID domain; the sequence is MGPGVSYLVR…AGFDGSAWDE (184 aa). The segment at 216 to 314 is disordered; it reads HDRMAGFDGS…PSSGRELFDD (99 aa). The CH1 stretch occupies residues 230-377; that stretch reads EEEEPPDHQY…AMAEQLRGEP (148 aa). Tyr239, Tyr240, and Tyr317 each carry phosphotyrosine. Residues 328–348 are disordered; sequence QAGAGAGPPNPTINGSAPRDL. Position 343 is a phosphoserine (Ser343). The SH2 domain maps to 378 to 469; sequence WFHGKLSRRE…GSELCLQQPV (92 aa).

Interacts with CPNE3; this interaction may mediate the binding of CPNE3 with ERBB2. Interacts with the Trk receptors NTRK1, NTRK2 and NTRK3; in a phosphotyrosine-dependent manner. Interacts with the NPXY motif of tyrosine-phosphorylated IGF1R and INSR in vitro via the PID domain. Once activated, binds to GRB2. Interacts with tyrosine-phosphorylated CD3T and DDR2. Interacts with the N-terminal region of APS. Interacts with phosphorylated LRP1 and IRS4. Interacts with INPP5D/SHIP1 and INPPL1/SHIP2. Interacts with ALK, GAB2, GRB7 and KIT. Interacts with PTPN6/SHP (tyrosine phosphorylated). Identified in a complex containing FGFR4, NCAM1, CDH2, PLCG1, FRS2, SRC, SHC1, GAP43 and CTTN. Interacts with FLT4 (tyrosine-phosphorylated). Interacts with EPHB1 and GRB2; activates the MAPK/ERK cascade to regulate cell migration. Interacts with PDGFRB (tyrosine-phosphorylated). Interacts with ERBB4. Interacts with TEK/TIE2 (tyrosine-phosphorylated). Interacts with PTK2/FAK1. Interacts with CEACAM1; this interaction is CEACAM1-phosphorylation-dependent and mediates interaction with EGFR or INSR resulting in decrease coupling of SHC1 to the MAPK3/ERK1-MAPK1/ERK2 pathway. Interacts (via PID domain) with PEAK1 (when phosphorylated). Found in a complex with PPP1CA, PPP1CC, SHC1 and PEAK1. In terms of processing, phosphorylated by activated epidermal growth factor receptor. Phosphorylated in response to KIT signaling. Tyrosine phosphorylated in response to FLT3 and FLT4 signaling and by ligand-activated ALK. Tyrosine phosphorylated by ligand-activated PDGFRB. Tyrosine phosphorylated by TEK/TIE2. May be tyrosine phosphorylated by activated PTK2/FAK1. Tyrosine phosphorylated by activated PTK2B/PYK2. Dephosphorylation by PTPN2 may regulate interaction with GRB2.

Its subcellular location is the cytoplasm. It localises to the cell junction. The protein localises to the focal adhesion. In terms of biological role, signaling adapter that couples activated growth factor receptors to signaling pathways. Participates in a signaling cascade initiated by activated KIT and KITLG/SCF. Participates in signaling downstream of the angiopoietin receptor TEK/TIE2, and plays a role in the regulation of endothelial cell migration and sprouting angiogenesis. This is SHC-transforming protein 1 (SHC1) from Bos taurus (Bovine).